The primary structure comprises 614 residues: UvrABC system protein C (614 aa).

A GIY-YIG domain is found at 12–89; the sequence is DKPGVYLFRG…IKEHRPRYNV (78 aa). One can recognise a UVR domain in the interval 198–233; it reads ADLVRGLARKMEAAAANLEFERAAELRDQLRAVEQV.

It belongs to the UvrC family. Interacts with UvrB in an incision complex.

It localises to the cytoplasm. Functionally, the UvrABC repair system catalyzes the recognition and processing of DNA lesions. UvrC both incises the 5' and 3' sides of the lesion. The N-terminal half is responsible for the 3' incision and the C-terminal half is responsible for the 5' incision. The sequence is that of UvrABC system protein C from Desulforudis audaxviator (strain MP104C).